The chain runs to 274 residues: 2,3,4,5-tetrahydropyridine-2,6-dicarboxylate N-succinyltransferase (274 aa).

Substrate-binding residues include Arg-104 and Asp-141.

It belongs to the transferase hexapeptide repeat family. In terms of assembly, homotrimer.

The protein resides in the cytoplasm. The enzyme catalyses (S)-2,3,4,5-tetrahydrodipicolinate + succinyl-CoA + H2O = (S)-2-succinylamino-6-oxoheptanedioate + CoA. The protein operates within amino-acid biosynthesis; L-lysine biosynthesis via DAP pathway; LL-2,6-diaminopimelate from (S)-tetrahydrodipicolinate (succinylase route): step 1/3. In Escherichia coli O157:H7, this protein is 2,3,4,5-tetrahydropyridine-2,6-dicarboxylate N-succinyltransferase (dapD).